An 87-amino-acid polypeptide reads, in one-letter code: Phosphocarrier protein HPr (87 aa).

Positions 1-87 constitute an HPr domain; sequence MAEKTFTITA…EEVIKEGLGE (87 aa). The Pros-phosphohistidine intermediate role is filled by H15. S46 carries the phosphoserine; by HPrK/P modification.

The protein belongs to the HPr family.

The protein resides in the cytoplasm. Its activity is regulated as follows. Phosphorylation on Ser-46 inhibits the phosphoryl transfer from enzyme I to HPr. Its function is as follows. General (non sugar-specific) component of the phosphoenolpyruvate-dependent sugar phosphotransferase system (sugar PTS). This major carbohydrate active-transport system catalyzes the phosphorylation of incoming sugar substrates concomitantly with their translocation across the cell membrane. The phosphoryl group from phosphoenolpyruvate (PEP) is transferred to the phosphoryl carrier protein HPr by enzyme I. Phospho-HPr then transfers it to the PTS EIIA domain. P-Ser-HPr interacts with the catabolite control protein A (CcpA), forming a complex that binds to DNA at the catabolite response elements cre, operator sites preceding a large number of catabolite-regulated genes. Thus, P-Ser-HPr is a corepressor in carbon catabolite repression (CCR), a mechanism that allows bacteria to coordinate and optimize the utilization of available carbon sources. P-Ser-HPr also plays a role in inducer exclusion, in which it probably interacts with several non-PTS permeases and inhibits their transport activity. The protein is Phosphocarrier protein HPr (ptsH) of Halalkalibacterium halodurans (strain ATCC BAA-125 / DSM 18197 / FERM 7344 / JCM 9153 / C-125) (Bacillus halodurans).